The chain runs to 426 residues: Histidine--tRNA ligase (426 aa).

This sequence belongs to the class-II aminoacyl-tRNA synthetase family. As to quaternary structure, homodimer.

Its subcellular location is the cytoplasm. The enzyme catalyses tRNA(His) + L-histidine + ATP = L-histidyl-tRNA(His) + AMP + diphosphate + H(+). The sequence is that of Histidine--tRNA ligase from Shewanella baltica (strain OS195).